Reading from the N-terminus, the 332-residue chain is Aspartate carbamoyltransferase catalytic subunit (332 aa).

The interval 1 to 20 (MPNTHDTKNNVSPSEYAKFD) is disordered. Carbamoyl phosphate is bound by residues R72 and T73. K100 is a binding site for L-aspartate. R122, H152, and Q155 together coordinate carbamoyl phosphate. L-aspartate-binding residues include R186 and R241. The carbamoyl phosphate site is built by G282 and P283.

The protein belongs to the aspartate/ornithine carbamoyltransferase superfamily. ATCase family. In terms of assembly, heterododecamer (2C3:3R2) of six catalytic PyrB chains organized as two trimers (C3), and six regulatory PyrI chains organized as three dimers (R2).

The catalysed reaction is carbamoyl phosphate + L-aspartate = N-carbamoyl-L-aspartate + phosphate + H(+). Its pathway is pyrimidine metabolism; UMP biosynthesis via de novo pathway; (S)-dihydroorotate from bicarbonate: step 2/3. Its function is as follows. Catalyzes the condensation of carbamoyl phosphate and aspartate to form carbamoyl aspartate and inorganic phosphate, the committed step in the de novo pyrimidine nucleotide biosynthesis pathway. The protein is Aspartate carbamoyltransferase catalytic subunit of Psychrobacter sp. (strain TAD1).